A 72-amino-acid polypeptide reads, in one-letter code: Large ribosomal subunit protein bL28 (72 aa).

It belongs to the bacterial ribosomal protein bL28 family.

The polypeptide is Large ribosomal subunit protein bL28 (Chlorobium phaeobacteroides (strain BS1)).